A 451-amino-acid chain; its full sequence is MQDNLPQIWEKTLNLIKPELTEVSFTTWIKSIEVISLEGNTMILGVPNVFTKDILTARYATLISNALKQTTSKNFEIRFIVPSEEKISKTEESQKKLEGSVNISVASDQFVSNNLNPKYTFDTFVIGNSNRFAHAASLAVAESPAKAYNPLFLYGGVGLGKTHLMHAIGHFILQNNPKAKVVYVSSETFTNELINSIRHDRNVEFRNRFRTIDVLLVDDIQFIAGKESTQEEFFHTFNALHESNKQIIISSDRPPKEIPTLEDRLRSRFEWGLITDIQPPDLETRIAILYKKAQMENIDVPNEVLTHIAKKIQSNIRELEGALIRIVAYSSLTNSEITVELASEALKELFSSKARQLNIDLIKEVVANKYNMKIEDFNSKKRTRSISYPRQIAMYLSRELTDLSLPKIGEEFGGRDHTTVMHAHEKISKDILADDNIKEKIERIAKEIKGD.

Residues 1–73 form a domain I, interacts with DnaA modulators region; the sequence is MQDNLPQIWE…SNALKQTTSK (73 aa). A domain II region spans residues 73–113; it reads KNFEIRFIVPSEEKISKTEESQKKLEGSVNISVASDQFVSN. A domain III, AAA+ region region spans residues 114 to 330; the sequence is NLNPKYTFDT…GALIRIVAYS (217 aa). The ATP site is built by Gly-158, Gly-160, Lys-161, and Thr-162. The domain IV, binds dsDNA stretch occupies residues 331–451; sequence SLTNSEITVE…ERIAKEIKGD (121 aa).

The protein belongs to the DnaA family. Oligomerizes as a right-handed, spiral filament on DNA at oriC.

It localises to the cytoplasm. Its function is as follows. Plays an essential role in the initiation and regulation of chromosomal replication. ATP-DnaA binds to the origin of replication (oriC) to initiate formation of the DNA replication initiation complex once per cell cycle. Binds the DnaA box (a 9 base pair repeat at the origin) and separates the double-stranded (ds)DNA. Forms a right-handed helical filament on oriC DNA; dsDNA binds to the exterior of the filament while single-stranded (ss)DNA is stabiized in the filament's interior. The ATP-DnaA-oriC complex binds and stabilizes one strand of the AT-rich DNA unwinding element (DUE), permitting loading of DNA polymerase. After initiation quickly degrades to an ADP-DnaA complex that is not apt for DNA replication. Binds acidic phospholipids. This is Chromosomal replication initiator protein DnaA from Alkaliphilus oremlandii (strain OhILAs) (Clostridium oremlandii (strain OhILAs)).